Reading from the N-terminus, the 235-residue chain is TVP38/TMEM64 family inner membrane protein YdjZ (235 aa).

The Periplasmic portion of the chain corresponds to 1–13 (MMMMQSRKIWYYR). The helical transmembrane segment at 14–34 (ITLIILLFAMLLAWALLPGVH) threads the bilayer. Residues 35–64 (EFINRSVAAFAAVDQQGIERFIQSYGALAA) are Cytoplasmic-facing. Residues 65 to 85 (VVSFLLMILQAIAAPLPAFLI) form a helical membrane-spanning segment. Residues 86–95 (TFANASLFGA) lie on the Periplasmic side of the membrane. The tract at residues 90-199 (ASLFGAFWGG…IVYSWAGSML (110 aa)) is VTT domain. The helical transmembrane segment at 96–116 (FWGGLLSWTSSMAGAALCFFI) threads the bilayer. Residues 117 to 176 (ARVMGREVVEKLTGKTVLDSMDGFFTRYGKHTILVCRLLPFVPFDPISYAAGLTSIRFRS) are Cytoplasmic-facing. Residues 177–197 (FFIATGLGQLPATIVYSWAGS) form a helical membrane-spanning segment. The Periplasmic segment spans residues 198–202 (MLTGG). The helical transmembrane segment at 203–223 (TFWFVTGLFILFALTVVIFMA) threads the bilayer. Residues 224 to 235 (KKIWLERQKRNA) lie on the Cytoplasmic side of the membrane.

It belongs to the TVP38/TMEM64 family.

The protein localises to the cell inner membrane. The chain is TVP38/TMEM64 family inner membrane protein YdjZ (ydjZ) from Escherichia coli (strain K12).